Reading from the N-terminus, the 671-residue chain is Probable potassium transport system protein Kup 2 (671 aa).

12 helical membrane passes run 18–38, 60–80, 103–123, 149–169, 173–193, 218–238, 252–272, 292–312, 343–363, 373–393, 402–422, and 424–444; these read GFLI…LYAM, VSLV…LIAL, WLIV…ALTP, VTTL…ASLV, FGPI…INSF, AGFF…ALYS, WPFV…WLLA, MVIY…QALI, LYIP…VLYF, YSLA…YFLI, IAFI…ASLV, and FING…VMFI.

It belongs to the HAK/KUP transporter (TC 2.A.72) family.

It is found in the cell membrane. The enzyme catalyses K(+)(in) + H(+)(in) = K(+)(out) + H(+)(out). Its function is as follows. Transport of potassium into the cell. Likely operates as a K(+):H(+) symporter. The chain is Probable potassium transport system protein Kup 2 from Lactococcus lactis subsp. cremoris (strain SK11).